The following is a 126-amino-acid chain: DNA-directed RNA polymerase 35 kDa subunit (126 aa).

This sequence belongs to the poxviridae DNA-directed RNA polymerase 35 kDa subunit family. The DNA-dependent RNA polymerase used for intermediate and late genes expression consists of eight subunits 147 kDa, 133 kDa, 35 kDa, 30 kDa, 22 kDa, 19 kDa, 18 kDa and 7 kDa totalling more than 500 kDa in mass. The same holoenzyme, with the addition of the transcription-specificity factor RAP94, is used for early gene expression.

Its subcellular location is the virion. The enzyme catalyses RNA(n) + a ribonucleoside 5'-triphosphate = RNA(n+1) + diphosphate. Functionally, part of the DNA-dependent RNA polymerase which catalyzes the transcription of viral DNA into RNA using the four ribonucleoside triphosphates as substrates. Responsible for the transcription of early, intermediate and late genes. DNA-dependent RNA polymerase associates with the early transcription factor (ETF) thereby allowing the early genes transcription. Late transcription, and probably also intermediate transcription, require newly synthesized RNA polymerase. This Ovis aries (Sheep) protein is DNA-directed RNA polymerase 35 kDa subunit (RPO35).